Reading from the N-terminus, the 388-residue chain is MANSRTVLILCGDYMEDYEVMVPFQALQAFGITVHTVCPGKKAGDSCPTAVHDFCGHQTYFESRGHNFTLNATFDEVDLSKYDGLVIPGGRAPEYLALTASVVELVKEFSRSGKPIASICHGQLILAAADTVNGRKCTAYATVGPSLVAAGAKWVEPITPDVCVVDGSLITAATYEGHPEFIQLFVKALGGKITGANKRILFLCGDYMEDYEVKVPFQSLQALGCQVDAVCPEKKAGDRCPTAIHDFEGDQTYSEKPGHTFALTTNFDDLVSSSYDALVIPGGRAPEYLALNEHVLNIVKEFMNSEKPVASICHGQQILAAAGVLKGRKCTAYPAVKLNVVLGGGTWLEPDPIDRCFTDGNLVTGAAWPGHPEFVSQLMALLGIQVSF.

2 PfpI endopeptidase domains span residues 5–190 (RTVL…KALG) and 198–383 (KRIL…ALLG). Cys120 serves as the catalytic Nucleophile. Cys120 carries the post-translational modification Cysteine sulfenic acid (-SOH). The active site involves His121. The active-site Nucleophile is Cys313. Position 313 is a cysteine sulfinic acid (-SO2H) (Cys313). His314 is an active-site residue.

Belongs to the peptidase C56 family. In terms of assembly, homotrimer. Post-translationally, cys-120 and Cys-313 are oxidized to sulfinic acid.

It carries out the reaction (R)-S-lactoylglutathione = methylglyoxal + glutathione. Functionally, possesses glyoxalase I activity. Catalyzes the conversion of hemimercaptal, formed from methylglyoxal and glutathione, to S-lactoylglutathione. May be involved in oxidative stress response. In Arabidopsis thaliana (Mouse-ear cress), this protein is Protein DJ-1 homolog D (DJ1D).